A 159-amino-acid polypeptide reads, in one-letter code: Dehydratase GME11372 (159 aa).

Active-site residues include H79 and H104.

This sequence belongs to the scytalone dehydratase family. As to quaternary structure, homotrimer. Each subunit contains an active site, located in the central part of the hydrophobic core of the monomer, which functions independently.

It functions in the pathway secondary metabolite biosynthesis. Its function is as follows. Dehydratase; part of the gene cluster that mediates the biosynthesis of dibenzodioxocinones such as pestalotiollide B, a novel class of inhibitors against cholesterol ester transfer protein (CEPT). The biosynthesis initiates from condensation of acetate and malonate units catalyzed by the non-reducing PKS pks8/GME11356. Pks8/GME11356 lacks a thioesterase (TE) domain, which is important to the cyclizing of the third ring of atrochrysone carboxylic acid, and the esterase GME11355 might play the role of TE and catalyzes the cyclization reaction of the C ring. The lactamase-like protein GME11357 (or other beta-lactamases in Pestalotiopsis microspora) probably hydrolyzes the thioester bond between the ACP of pks8/GME11356 and the intermediate to release atrochrysone carboxylic acid, which is spontaneously dehydrates to form endocrocin anthrone. Endocrocin anthrone is further converted to emodin via the endocrocin intermediate. Emodin is then oxidized by several enzymes such as the Baeyer-Villiger oxidase GME11358, the oxidoreductase GME11367, the short chain dehydrogenase/reductase GME11373, as well as by other oxidoreductases from the cluster, to modify the A and C rings and open the B ring, and finally yield monodictyphenone. The prenyltransferase GME11375 may catalyze the addition reaction between the C5 side chains and the carbon bone of dibenzodioxocinones. The remaining biochemical reactions to the final product dibenzodioxocinones should be methylation catalyzed by methyltransferase GME11366 and reduction and lactonization reaction catalyzed by a series of oxidordeuctases. The chain is Dehydratase GME11372 from Pestalotiopsis microspora.